A 146-amino-acid chain; its full sequence is Large ribosomal subunit protein uL24z (146 aa).

Disordered regions lie at residues 1–26 (MKYN…SSER) and 121–146 (KAKG…QNVD). Residues 9–18 (SSRRKNRKAH) are compositionally biased toward basic residues. Positions 121-138 (KAKGRAAADKEKGTKFTS) are enriched in basic and acidic residues.

The protein belongs to the universal ribosomal protein uL24 family.

This chain is Large ribosomal subunit protein uL24z (RPL26A), found in Arabidopsis thaliana (Mouse-ear cress).